Reading from the N-terminus, the 135-residue chain is Large ribosomal subunit protein uL16c (135 aa).

The protein belongs to the universal ribosomal protein uL16 family. Part of the 50S ribosomal subunit.

The protein resides in the plastid. Its subcellular location is the chloroplast. The protein is Large ribosomal subunit protein uL16c of Olimarabidopsis pumila (Dwarf rocket).